The following is a 1214-amino-acid chain: MYLYSLTLQQATGIVCAINGNFSGGKTQEIAVARGKILDLLRPDENGKIQTIHSVEVFGAIRSLAQFRLTGAQKDYIVVGSDSGRIVILEYNKEKNVFDKVHQETFGKSGCRRIVPGQYVAVDPKGRAVMIGACEKQKLVYVLNRDTTARLTISSPLEAHKSHTICYSLCGVDCGFDNPIFAAIELDYSEADQDPTGQAASEAQKHLTFYELDLGLNHVSRKWSNPVDNGANMLVTVPGGADGPSGVLVCAENFVIYMNQGHPDVRAVIPRRTDLPAERGVLVVSAAVHKQKTMFFFLIQTEYGDVFKVTLDHNGDHVSELKVKYFDTIPVASSICVLKLGFLFSASEFGNHGLYQFQAIGEEPDVESSSSNLMETEEGFQPVFFQPRRLKNLVRIDQVESLMPLMDMKVLNIFEEETPQIFSLCGRGPRSSLRILRPGLAITEMAVSQLPGQPSAVWTVKKNVSDEFDAYIVVSFTNATLVLSIGEQVEEVNDSGFLDTTPSLAVSLIGDDSLMQVHPNGIRHIREDGRINEWRTPGKRSIVKVGYNRLQVVIALSGGELIYFEADMTGQLMEVEKHEMSGDVACLDIAPVPEGRKRSRFLAVGSYDNTVRILSLDPDDCLQILSVQSVSSAPESLLFLEVQASIGGDDGADHPANLFLNSGLQNGVLFRTVVDMVTGQLSDSRSRFLGLKPPKLFSISVRGRSAMLCLSSRPWLGYIHRGHFHLTPLSYETLEFAAPFSSDQCAEGVVSVAGDALRIFMIDRLGETFNETVVPLRYTPRKFVLHPKRKLLVIIESDQGAFTAEEREAARKECFEAGGVGENGNGNADQMENGADDEDKEDPLSDEQYGYPKAESEKWVSCIRVLDPKTATTTCLLELQDNEAAYSVCTVNFHDKEYGTLLAVGTVKGMQFWPKKNLVAGFIHIYRFVEDGKSLELLHKTQVEGVPLALCQFQGRLLAGIGPVLRLYDLGKKRLLRKCENKLFPNTIISIQTYRDRIYVGDIQESFHYCKYRRDENQLYIFADDCVPRWLTASHHVDFDTMAGADKFGNVYFVRLPQDLSEEIEEDPTGGKIKWEQGKLNGAPNKVDEIVQFHVGDVVTCLQKASMIPGGSESIMYGTVMGSIGALHAFTSRDDVDFFSHLEMHMRQEYPPLCGRDHMAYRSAYFPVKDVIDGDLCEQFPTLPMDLQRKIADELDRTPAEILKKLEDARNKII.

A disordered region spans residues 817-848; it reads AGGVGENGNGNADQMENGADDEDKEDPLSDEQ. Residues 834–845 show a composition bias toward acidic residues; it reads GADDEDKEDPLS.

Belongs to the RSE1 family. In terms of assembly, identified in the spliceosome C complex. Component of the U11/U12 snRNPs that are part of the U12-type spliceosome. Component of splicing factor SF3B complex. In terms of tissue distribution, expressed at low levels in roots, leaves, inflorescence and, to a lower extent, in siliques.

The protein resides in the nucleus. In terms of biological role, subunit of the splicing factor SF3B required for 'A' complex assembly formed by the stable binding of U2 snRNP to the branchpoint sequence (BPS) in pre-mRNA. Sequence independent binding of SF3A/SF3B complex upstream of the branch site is essential, it may anchor U2 snRNP to the pre-mRNA. May also be involved in the assembly of the 'E' complex. Also belongs to the minor U12-dependent spliceosome, which is involved in the splicing of rare class of nuclear pre-mRNA intron. Required for pollen and ovule development, especially during the transition from microspore to the bicellular stage in pollen development. Involved in the accumulation of QRT1 and QRT3. The polypeptide is Spliceosome-associated protein 130 A (Arabidopsis thaliana (Mouse-ear cress)).